A 96-amino-acid chain; its full sequence is Transmembrane protein PMIS2 (96 aa).

2 helical membrane passes run 31 to 51 (VMLA…AIYF) and 76 to 96 (WFNM…VLVL).

The protein belongs to the CD225/Dispanin family. In terms of tissue distribution, specifically expressed in testis.

Its subcellular location is the membrane. May play a role in spermatozoa mobility. The sequence is that of Transmembrane protein PMIS2 from Mus musculus (Mouse).